Here is a 454-residue protein sequence, read N- to C-terminus: Bifunctional protein GlmU (454 aa).

Residues 1–226 form a pyrophosphorylase region; sequence MALNVVILAA…AIEVEGANNR (226 aa). Residues 8–11, Lys22, Gln73, 78–79, 100–102, Gly137, Glu151, Asn166, and Asn224 each bind UDP-N-acetyl-alpha-D-glucosamine; these read LAAG, GT, and YGD. Residue Asp102 coordinates Mg(2+). Asn224 is a binding site for Mg(2+). The tract at residues 227-247 is linker; it reads VQLAQLERAYQARAAEKLMLE. An N-acetyltransferase region spans residues 248-454; sequence GANLRDPARI…GWPRPVKLKK (207 aa). 2 residues coordinate UDP-N-acetyl-alpha-D-glucosamine: Arg330 and Lys348. His360 (proton acceptor) is an active-site residue. 2 residues coordinate UDP-N-acetyl-alpha-D-glucosamine: Tyr363 and Asn374. Acetyl-CoA is bound by residues Ala377, 383 to 384, Ser402, Ala420, and Arg437; that span reads NY.

It in the N-terminal section; belongs to the N-acetylglucosamine-1-phosphate uridyltransferase family. In the C-terminal section; belongs to the transferase hexapeptide repeat family. Homotrimer. Mg(2+) serves as cofactor.

Its subcellular location is the cytoplasm. It catalyses the reaction alpha-D-glucosamine 1-phosphate + acetyl-CoA = N-acetyl-alpha-D-glucosamine 1-phosphate + CoA + H(+). The catalysed reaction is N-acetyl-alpha-D-glucosamine 1-phosphate + UTP + H(+) = UDP-N-acetyl-alpha-D-glucosamine + diphosphate. Its pathway is nucleotide-sugar biosynthesis; UDP-N-acetyl-alpha-D-glucosamine biosynthesis; N-acetyl-alpha-D-glucosamine 1-phosphate from alpha-D-glucosamine 6-phosphate (route II): step 2/2. It functions in the pathway nucleotide-sugar biosynthesis; UDP-N-acetyl-alpha-D-glucosamine biosynthesis; UDP-N-acetyl-alpha-D-glucosamine from N-acetyl-alpha-D-glucosamine 1-phosphate: step 1/1. It participates in bacterial outer membrane biogenesis; LPS lipid A biosynthesis. Functionally, catalyzes the last two sequential reactions in the de novo biosynthetic pathway for UDP-N-acetylglucosamine (UDP-GlcNAc). The C-terminal domain catalyzes the transfer of acetyl group from acetyl coenzyme A to glucosamine-1-phosphate (GlcN-1-P) to produce N-acetylglucosamine-1-phosphate (GlcNAc-1-P), which is converted into UDP-GlcNAc by the transfer of uridine 5-monophosphate (from uridine 5-triphosphate), a reaction catalyzed by the N-terminal domain. This is Bifunctional protein GlmU from Shewanella woodyi (strain ATCC 51908 / MS32).